Reading from the N-terminus, the 380-residue chain is Protein Wnt-5a (380 aa).

The signal sequence occupies residues 1–37; the sequence is MKKPIGILSPGVALGTAGGAMSSKFFLMALATFFSFA. The propeptide occupies 38-61; sequence QVVIEANSWWSLGMNNPVQMSEVH. A disulfide bond links C104 and C115. Residues N114 and N120 are each glycosylated (N-linked (GlcNAc...) asparagine). Disulfide bonds link C154–C162, C164–C182, C238–C252, C240–C247, C309–C340, C325–C335, C339–C379, C355–C370, C357–C367, and C362–C363. S244 is lipidated: O-palmitoleoyl serine; by PORCN. 2 N-linked (GlcNAc...) asparagine glycosylation sites follow: N312 and N326.

Belongs to the Wnt family. Forms a soluble 1:1 complex with AFM; this prevents oligomerization and is required for prolonged biological activity. The complex with AFM may represent the physiological form in body fluids. Homooligomer; disulfide-linked, leading to inactivation (in vitro). Interacts with PORCN. Interacts with WLS. Interacts with glypican GCP3. Interacts with PKD1 (via extracellular domain). Interacts with TMEM67. In terms of processing, glycosylation is necessary for secretion but not for activity. Post-translationally, palmitoleoylation is required for efficient binding to frizzled receptors. Depalmitoleoylation leads to Wnt signaling pathway inhibition. Proteolytic processing by TIKI1 and TIKI2 promotes oxidation and formation of large disulfide-bond oligomers, leading to inactivation of WNT5A.

The protein resides in the secreted. It is found in the extracellular space. The protein localises to the extracellular matrix. Ligand for members of the frizzled family of seven transmembrane receptors. Can activate or inhibit canonical Wnt signaling, depending on receptor context. In the presence of FZD4, activates beta-catenin signaling. In the presence of ROR2, inhibits the canonical Wnt pathway by promoting beta-catenin degradation through a GSK3-independent pathway which involves down-regulation of beta-catenin-induced reporter gene expression. Suppression of the canonical pathway allows chondrogenesis to occur and inhibits tumor formation. Stimulates cell migration. Decreases proliferation, migration, invasiveness and clonogenicity of carcinoma cells and may act as a tumor suppressor. Mediates motility of melanoma cells. Required during embryogenesis for extension of the primary anterior-posterior axis and for outgrowth of limbs and the genital tubercle. Inhibits type II collagen expression in chondrocytes. The polypeptide is Protein Wnt-5a (Wnt5a) (Rattus norvegicus (Rat)).